The following is a 349-amino-acid chain: UDP-3-O-acylglucosamine N-acyltransferase (349 aa).

Catalysis depends on His-240, which acts as the Proton acceptor.

Belongs to the transferase hexapeptide repeat family. LpxD subfamily. In terms of assembly, homotrimer.

It catalyses the reaction a UDP-3-O-[(3R)-3-hydroxyacyl]-alpha-D-glucosamine + a (3R)-hydroxyacyl-[ACP] = a UDP-2-N,3-O-bis[(3R)-3-hydroxyacyl]-alpha-D-glucosamine + holo-[ACP] + H(+). The protein operates within bacterial outer membrane biogenesis; LPS lipid A biosynthesis. Functionally, catalyzes the N-acylation of UDP-3-O-acylglucosamine using 3-hydroxyacyl-ACP as the acyl donor. Is involved in the biosynthesis of lipid A, a phosphorylated glycolipid that anchors the lipopolysaccharide to the outer membrane of the cell. This is UDP-3-O-acylglucosamine N-acyltransferase from Porphyromonas gingivalis (strain ATCC BAA-308 / W83).